The primary structure comprises 205 residues: Heme-binding protein 2 (205 aa).

A disordered region spans residues 1–39; sequence MAEPLQPDPGAAEDAAAQAVETPGWKAPEDAGPQPGSYE. Ala2 carries the N-acetylalanine modification. At Ser181 the chain carries Phosphoserine.

Belongs to the HEBP family. In terms of assembly, monomer. Interacts with LRPPRC. May interact with BCL2L1; an interaction with BCL2L1 was observed using a peptide, but not with the full-length protein. The full-length protein would have to undergo a major conformation change for the interaction to occur. Interacts with PDCD6. In terms of tissue distribution, detected in placenta.

The protein resides in the cytoplasm. It localises to the mitochondrion. Can promote mitochondrial permeability transition and facilitate necrotic cell death under different types of stress conditions. In Homo sapiens (Human), this protein is Heme-binding protein 2 (HEBP2).